A 205-amino-acid polypeptide reads, in one-letter code: MPSYTLYYFNGRGRAEICRMLFAVASVQYQDKRIELAEWTQFKTKMPCHMLPILEIDTETQVPQSMAISRYLAREFGFYGKNNMDMFKVDCLCDSLFELFNDYMAVYNEKDAAKKTELQKRFQNTCLRVLPYMEKTLEANKGGAGWFIGDQILLCDMMTHAALENPIQENANLLKEYPKLAALRTRVAAHPKIAAYIKKRNNTAF.

Residues 2-80 (PSYTLYYFNG…YLAREFGFYG (79 aa)) enclose the GST N-terminal domain. In terms of domain architecture, GST C-terminal spans 82 to 205 (NNMDMFKVDC…YIKKRNNTAF (124 aa)).

It belongs to the GST superfamily. Lens.

S-crystallins are structural components of squids and octopi eye lens. Contains relatively little if any GST activity. This chain is S-crystallin SL11, found in Nototodarus sloanii (Wellington flying squid).